A 416-amino-acid polypeptide reads, in one-letter code: Putative competence-damage inducible protein (416 aa).

The protein belongs to the CinA family.

This chain is Putative competence-damage inducible protein, found in Bacillus pumilus (strain SAFR-032).